Consider the following 193-residue polypeptide: 7-methyl-GTP pyrophosphatase (193 aa).

Residue Asp-70 is the Proton acceptor of the active site.

Belongs to the Maf family. YceF subfamily. A divalent metal cation serves as cofactor.

The protein localises to the cytoplasm. The enzyme catalyses N(7)-methyl-GTP + H2O = N(7)-methyl-GMP + diphosphate + H(+). Its function is as follows. Nucleoside triphosphate pyrophosphatase that hydrolyzes 7-methyl-GTP (m(7)GTP). May have a dual role in cell division arrest and in preventing the incorporation of modified nucleotides into cellular nucleic acids. This is 7-methyl-GTP pyrophosphatase from Vibrio parahaemolyticus serotype O3:K6 (strain RIMD 2210633).